Reading from the N-terminus, the 643-residue chain is Mediator of RNA polymerase II transcription subunit 17 (643 aa).

The disordered stretch occupies residues 53–82 (SDSEEDGAERARAGREQWKQEPEEDEGQLK). Basic and acidic residues predominate over residues 60 to 73 (AERARAGREQWKQE).

This sequence belongs to the Mediator complex subunit 17 family. As to quaternary structure, component of the Mediator complex.

The protein localises to the nucleus. Its function is as follows. Component of the Mediator complex, a coactivator involved in the regulated transcription of nearly all RNA polymerase II-dependent genes. Mediator functions as a bridge to convey information from gene-specific regulatory proteins to the basal RNA polymerase II transcription machinery. Mediator is recruited to promoters by direct interactions with regulatory proteins and serves as a scaffold for the assembly of a functional preinitiation complex with RNA polymerase II and the general transcription factors. The chain is Mediator of RNA polymerase II transcription subunit 17 (med17) from Danio rerio (Zebrafish).